Here is a 519-residue protein sequence, read N- to C-terminus: MAEHEQVHEHVRVAVIGSGFGGLGAAVRLRREGITDFVVLERAGSVGGTWRDNSYPGCACDVPSHLYSFSFAPNPEWPRTFSGQEHIRAYLEHVADTFGLRPHLRFDSEVKRMAWDTEQLRWEIETVRGTLTADVVVSATGPLSDPKVPDIPGLDTFPGKVFHSARWDHDYDLAGQRVAMIGTGASAIQIVPSIQPKVDRLTLFQRTPAWVMPRVDRAISGAERALHRALPATTKLRRGLLWGIRELQVQAFTKHPNELGFVEQIAKRNMGAAIKDPALRAKLTPDYRIGCKRILLSSTYYPALAKPNVDVVASGLSEVRGSTLVAADGTEAEADAIVFGTGFHVTDMPIAERVVGADGRTLAETWKGGMEALRGGTAAGFPNFMTVIGPNTGLGNSSMILMIESQLNYLADYLRQLNVLGGRTALDPRPAAVRNWNHRVQERMKRTVWNTGGCTSWYLDASGRNTTVWPGTTAEFRRETRRVDLAEYQVLRPAPAQVGAKAAEADTGADTGADAEVSA.

FAD-binding positions include Glu41, 49 to 52 (TWRD), Asp61, Tyr67, and Val110. Residue 59–61 (ACD) participates in NADP(+) binding. NADP(+) is bound by residues 183 to 189 (TGASAIQ), 206 to 207 (RT), and 292 to 293 (KR). Position 399 (Met399) interacts with FAD. Residues 499-519 (GAKAAEADTGADTGADAEVSA) form a disordered region.

This sequence belongs to the FAD-binding monooxygenase family. FAD serves as cofactor.

Functionally, catalyzes a Baeyer-Villiger oxidation reaction, i.e. the insertion of an oxygen atom into a carbon-carbon bond adjacent to a carbonyl, which converts ketones to esters or lactones using NADPH and/or NADH as an electron donor. Thus, can convert bicyclo[3.2.0]hept-2-en-6-one into the oxidative lactone products 2-oxabicyclo[3.3.0]oct-6-en-3-one and 3-oxabicyclo[3.3.0]oct-6-en-2-one. Is also able to catalyze the sulfoxidation of methyl phenyl sulfide (thioanisole). The chain is Baeyer-Villiger monooxygenase from Streptomyces coelicolor (strain ATCC BAA-471 / A3(2) / M145).